We begin with the raw amino-acid sequence, 1026 residues long: Multidrug resistance protein MdtC (1026 aa).

11 consecutive transmembrane segments (helical) span residues 12–32 (VATTLLTLAIAISGVISFSLL), 333–353 (EVEQSLVIAIGLVILVVFIFL), 360–380 (LIPAVAVPVSLIGSFTAMYLC), 387–407 (LSLMALTIATGFVVDDAIVVL), 431–451 (VGFTVLSMSVSLVAVFIPLLL), 463–483 (FAVTLSVSIGLSLIISLTLTP), 528–548 (WVLAVFLATIALNVWLYVSIP), 853–873 (LLLIAAAIATVYIVLGILYES), 897–917 (LFGAPFSLIALIGIMLLIGIV), 953–973 (PIMMTTLAALFGALPLVLTHG), and 984–1004 (ITIVGGLIVSQLLTLYTTPVV).

It belongs to the resistance-nodulation-cell division (RND) (TC 2.A.6) family. MdtC subfamily. As to quaternary structure, part of a tripartite efflux system composed of MdtA, MdtB and MdtC. MdtC forms a heteromultimer with MdtB.

The protein resides in the cell inner membrane. This chain is Multidrug resistance protein MdtC, found in Serratia proteamaculans (strain 568).